The following is a 125-amino-acid chain: MAVSKEEILETISNMTVMEVVELIEEMEEKFGVTAAAAVAAAPAAAGGEAEAAEEQTEFDVVLSSFGSNKVAVIKAVRGITGLGLKEAKEVVEGAPSPIKEGASKEEAEEIKAKLEEAGASVEVK.

This sequence belongs to the bacterial ribosomal protein bL12 family. As to quaternary structure, homodimer. Part of the ribosomal stalk of the 50S ribosomal subunit. Forms a multimeric L10(L12)X complex, where L10 forms an elongated spine to which 2 to 4 L12 dimers bind in a sequential fashion. Binds GTP-bound translation factors.

Forms part of the ribosomal stalk which helps the ribosome interact with GTP-bound translation factors. Is thus essential for accurate translation. The polypeptide is Large ribosomal subunit protein bL12 (Alkalilimnicola ehrlichii (strain ATCC BAA-1101 / DSM 17681 / MLHE-1)).